We begin with the raw amino-acid sequence, 83 residues long: Small ribosomal subunit protein uS17 (83 aa).

Belongs to the universal ribosomal protein uS17 family. Part of the 30S ribosomal subunit.

Functionally, one of the primary rRNA binding proteins, it binds specifically to the 5'-end of 16S ribosomal RNA. This Synechococcus sp. (strain RCC307) protein is Small ribosomal subunit protein uS17.